The chain runs to 153 residues: Vasotocin-neurophysin VT 1 (153 aa).

Positions 1–19 (MPQCALLLSLLGLLALSSA) are cleaved as a signal peptide. The cysteines at positions 20 and 25 are disulfide-linked. Position 28 is a glycine amide (G28). Cystine bridges form between C41-C85, C44-C58, C52-C75, C59-C65, C92-C105, C99-C117, and C106-C111.

This sequence belongs to the vasopressin/oxytocin family. In terms of processing, seven disulfide bonds are present in neurophysin.

The protein resides in the secreted. In terms of biological role, vasotocin is probably an antidiuretic hormone. This Takifugu rubripes (Japanese pufferfish) protein is Vasotocin-neurophysin VT 1.